The chain runs to 224 residues: Octanoyltransferase (224 aa).

A BPL/LPL catalytic domain is found at 29–224; that stretch reads PGTPDELWLC…GDRLESYLSP (196 aa). Substrate-binding positions include 68 to 75, 157 to 159, and 170 to 172; these read RGGQVTYH, ALG, and GLA. The active-site Acyl-thioester intermediate is Cys188.

It belongs to the LipB family.

The protein resides in the cytoplasm. The catalysed reaction is octanoyl-[ACP] + L-lysyl-[protein] = N(6)-octanoyl-L-lysyl-[protein] + holo-[ACP] + H(+). Its pathway is protein modification; protein lipoylation via endogenous pathway; protein N(6)-(lipoyl)lysine from octanoyl-[acyl-carrier-protein]: step 1/2. Functionally, catalyzes the transfer of endogenously produced octanoic acid from octanoyl-acyl-carrier-protein onto the lipoyl domains of lipoate-dependent enzymes. Lipoyl-ACP can also act as a substrate although octanoyl-ACP is likely to be the physiological substrate. In Methylibium petroleiphilum (strain ATCC BAA-1232 / LMG 22953 / PM1), this protein is Octanoyltransferase.